The sequence spans 885 residues: Alanine--tRNA ligase (885 aa).

The Zn(2+) site is built by H564, H568, C676, and H680.

Belongs to the class-II aminoacyl-tRNA synthetase family. Zn(2+) serves as cofactor.

It localises to the cytoplasm. The catalysed reaction is tRNA(Ala) + L-alanine + ATP = L-alanyl-tRNA(Ala) + AMP + diphosphate. Catalyzes the attachment of alanine to tRNA(Ala) in a two-step reaction: alanine is first activated by ATP to form Ala-AMP and then transferred to the acceptor end of tRNA(Ala). Also edits incorrectly charged Ser-tRNA(Ala) and Gly-tRNA(Ala) via its editing domain. The polypeptide is Alanine--tRNA ligase (Brucella ovis (strain ATCC 25840 / 63/290 / NCTC 10512)).